The primary structure comprises 383 residues: UDP-N-acetylenolpyruvoylglucosamine reductase (383 aa).

Positions 1–13 are enriched in basic and acidic residues; that stretch reads MRTRRDVPADRSG. The disordered stretch occupies residues 1–26; that stretch reads MRTRRDVPADRSGRSRVSRHPGLSVP. In terms of domain architecture, FAD-binding PCMH-type spans 49 to 215; sequence LGGPATRLLT…LRVRFELENA (167 aa). R192 is a catalytic residue. The Proton donor role is filled by S271. The active site involves E375.

It belongs to the MurB family. FAD is required as a cofactor.

The protein resides in the cytoplasm. The enzyme catalyses UDP-N-acetyl-alpha-D-muramate + NADP(+) = UDP-N-acetyl-3-O-(1-carboxyvinyl)-alpha-D-glucosamine + NADPH + H(+). Its pathway is cell wall biogenesis; peptidoglycan biosynthesis. Its function is as follows. Cell wall formation. The polypeptide is UDP-N-acetylenolpyruvoylglucosamine reductase (Streptomyces coelicolor (strain ATCC BAA-471 / A3(2) / M145)).